A 463-amino-acid polypeptide reads, in one-letter code: MLTKEYRGVASINGPLVVVDGVTDVGFDEMVEVITPDKHKRRGRVLQVSKNRAVIQVFEGTSGLATETTRVKFLRHPMEIALSRDILGRVFNGVGEPIDGGGEVYSNKKYNINGNAINPYSRQYPRNYIQTGVSAIDGLITLIRGQKLPIFSGNGLPHNQLAAQIARQARLGDDNEDFAVVFVAMGIKHDDANFFINSFEKSGVLQNVVVFLNLADDPAVERIIAPRIGLTAAEYLAFEEGMHILVIMTDMTNYCEALRELSSRREEVPSRKGYPGYLYSDLASLYERAGMIKGERGSITQLPILTMPNDDITHPVPDLTGYITEGQIVLKRDLYQRGVYPPINILPSLSRLMKDGIGEGFTREDHPNVSSQLYAAYSRVQEVKSLASVIGEDELSSLDQTYLKFGRVFEKRFLSQGREENRTIEQTLDLAWEVLSELPPTELDRISGEELEKYYRGSVNDNG.

The protein belongs to the ATPase alpha/beta chains family.

Produces ATP from ADP in the presence of a proton gradient across the membrane. The V-type beta chain is a regulatory subunit. The polypeptide is V-type ATP synthase beta chain (Halothermothrix orenii (strain H 168 / OCM 544 / DSM 9562)).